The chain runs to 184 residues: Holliday junction branch migration complex subunit RuvA (184 aa).

Residues 1–61 form a domain I region; that stretch reads MIAALRGNIF…ENEYTLYGFA (61 aa). The tract at residues 62-135 is domain II; it reads DKNEKKLFDS…GEFEVVFEEQ (74 aa). Glutamine 135 is a region of interest (flexible linker). The segment at 135 to 184 is domain III; the sequence is QNPVFNQALSALESLGFNKNDIVKALNGIKSDNLEETIKLALKKLSKDIK.

This sequence belongs to the RuvA family. In terms of assembly, homotetramer. Forms an RuvA(8)-RuvB(12)-Holliday junction (HJ) complex. HJ DNA is sandwiched between 2 RuvA tetramers; dsDNA enters through RuvA and exits via RuvB. An RuvB hexamer assembles on each DNA strand where it exits the tetramer. Each RuvB hexamer is contacted by two RuvA subunits (via domain III) on 2 adjacent RuvB subunits; this complex drives branch migration. In the full resolvosome a probable DNA-RuvA(4)-RuvB(12)-RuvC(2) complex forms which resolves the HJ.

The protein localises to the cytoplasm. In terms of biological role, the RuvA-RuvB-RuvC complex processes Holliday junction (HJ) DNA during genetic recombination and DNA repair, while the RuvA-RuvB complex plays an important role in the rescue of blocked DNA replication forks via replication fork reversal (RFR). RuvA specifically binds to HJ cruciform DNA, conferring on it an open structure. The RuvB hexamer acts as an ATP-dependent pump, pulling dsDNA into and through the RuvAB complex. HJ branch migration allows RuvC to scan DNA until it finds its consensus sequence, where it cleaves and resolves the cruciform DNA. The protein is Holliday junction branch migration complex subunit RuvA of Nautilia profundicola (strain ATCC BAA-1463 / DSM 18972 / AmH).